Consider the following 624-residue polypeptide: Cell pattern formation-associated protein ust1 (624 aa).

2 disordered regions span residues 1-24 (MSTA…APTG) and 43-99 (RSGS…GHSS). A compositionally biased stretch (low complexity) spans 43 to 62 (RSGSVPASASGSAPGSASGS). Residues 70-85 (QHHTGHHHYSAHHTHS) are compositionally biased toward basic residues. The HTH APSES-type domain occupies 233 to 339 (RVTTTLWEDE…PNIQSFLYHP (107 aa)). The segment at residues 267–288 (GTKLLNVCGMSRGKRDGILKNE) is a DNA-binding region (H-T-H motif). Residues 352-362 (AQERQAQRQRA) show a composition bias toward low complexity. 3 disordered regions span residues 352-456 (AQER…QQQQ), 474-504 (QQAY…LNNS), and 538-624 (SWND…IHHE). Residues 369 to 391 (PGANGTSQAPPLMRANTTPSNGD) show a composition bias toward polar residues. Low complexity predominate over residues 392–426 (TSTFSSGLSSLGSWTGSHDQGHASAPTTAQPSPSS). A compositionally biased stretch (polar residues) spans 427–451 (MHNGATQMHMSLSNHGTASPTYAQS). Residues 571-587 (LDGDDLHSPDSSDDRLA) are compositionally biased toward basic and acidic residues. Over residues 615–624 (VGNGSGIHHE) the composition is skewed to gly residues.

This sequence belongs to the EFG1/PHD1/stuA family. Phosphorylated but is not a target of cAMP signaling.

It is found in the nucleus. Its function is as follows. Transcription factor that regulates asexual reproduction. Binds the StuA-response elements (StRE) with the consensus sequence 5'-(A/T)CGCG(T/A)N(A/C)-3' at the promoters of target genes. Regulates dimorphism, virulence, and the sporulation program. Required for mating, gall induction, and sporogenesis in maize tissue. Regulates expression of the filament-down-regulated gene UM00205 and the teliospore-specific gene ssp1. This is Cell pattern formation-associated protein ust1 (ust1) from Mycosarcoma maydis (Corn smut fungus).